The chain runs to 612 residues: Probable methyltransferase PMT9 (612 aa).

Topologically, residues Met-1–Lys-14 are cytoplasmic. Residues Leu-15 to Gly-35 traverse the membrane as a helical; Signal-anchor for type II membrane protein segment. Residues Ser-36–Ser-612 lie on the Lumenal side of the membrane. N-linked (GlcNAc...) asparagine glycosylation is found at Asn-107, Asn-383, and Asn-562.

This sequence belongs to the methyltransferase superfamily.

The protein localises to the golgi apparatus membrane. This chain is Probable methyltransferase PMT9, found in Arabidopsis thaliana (Mouse-ear cress).